The chain runs to 87 residues: UPF0235 protein TGRD_618 (87 aa).

This sequence belongs to the UPF0235 family.

The chain is UPF0235 protein TGRD_618 from Endomicrobium trichonymphae.